Reading from the N-terminus, the 342-residue chain is MKERIKAICLEKPNNVVVKEVPYPEKSDNDVLIQVESMGICGSDIGAYRGTNPLVTYPRILGHEIVGRVIESGIGMSDGVRVGDRVIVDPYVCCGQCYPCSIGRTNCCESLKVIGVHIDGGMQEVIRHPAHLLTKVPDNLPIHQLPLAEPLTIALHALHRTTLKSGEHIVIIGAGAIGLMAALAAVQYGAIPILVDILEQRLEYAKSLGIEHIVNPHKEDDIKRIKEITSGRMAEVVMEASGANISIKNTLHYASFAGRIALTGWPKTETPLPTNLITFKELNIYGSRTSKGEFEEALDMLATNKINASHIITKCIKFEEIPSFISDLSDHPENYLKINAVF.

Residues C41, H63, C94, C97, C100, C108, and E149 each coordinate Zn(2+).

The protein belongs to the zinc-containing alcohol dehydrogenase family. It depends on Zn(2+) as a cofactor.

This is an uncharacterized protein from Haemophilus influenzae (strain ATCC 51907 / DSM 11121 / KW20 / Rd).